Here is an 80-residue protein sequence, read N- to C-terminus: Exodeoxyribonuclease 7 small subunit (80 aa).

Belongs to the XseB family. Heterooligomer composed of large and small subunits.

It is found in the cytoplasm. It carries out the reaction Exonucleolytic cleavage in either 5'- to 3'- or 3'- to 5'-direction to yield nucleoside 5'-phosphates.. Functionally, bidirectionally degrades single-stranded DNA into large acid-insoluble oligonucleotides, which are then degraded further into small acid-soluble oligonucleotides. The chain is Exodeoxyribonuclease 7 small subunit from Escherichia coli O139:H28 (strain E24377A / ETEC).